A 324-amino-acid chain; its full sequence is Geranylgeranyl diphosphate synthase (324 aa).

Residues Lys46, Arg49, and His78 each coordinate isopentenyl diphosphate. Mg(2+) is bound by residues Asp85 and Asp89. Arg94 contacts an all-trans-polyprenyl diphosphate. Arg95 lines the isopentenyl diphosphate pocket. Positions 176, 177, 214, 231, and 241 each coordinate an all-trans-polyprenyl diphosphate.

Belongs to the FPP/GGPP synthase family. Requires Mg(2+) as cofactor.

The enzyme catalyses isopentenyl diphosphate + (2E,6E)-farnesyl diphosphate = (2E,6E,10E)-geranylgeranyl diphosphate + diphosphate. It participates in isoprenoid biosynthesis; geranylgeranyl diphosphate biosynthesis; geranylgeranyl diphosphate from farnesyl diphosphate and isopentenyl diphosphate: step 1/1. Its function is as follows. Catalyzes the sequential condensation of isopentenyl pyrophosphate with the allylic pyrophosphates to yield geranylgeranyl diphosphate (GGPP) which is a precursor of the ether-linked lipids. The chain is Geranylgeranyl diphosphate synthase from Methanosarcina mazei (strain ATCC BAA-159 / DSM 3647 / Goe1 / Go1 / JCM 11833 / OCM 88) (Methanosarcina frisia).